We begin with the raw amino-acid sequence, 236 residues long: Envelope glycoprotein (236 aa).

The Lumenal segment spans residues 1–202; sequence CQFDGNTISG…EWILGVLNGN (202 aa). A glycan (N-linked (GlcNAc...) asparagine; by host) is linked at Asn25. Cystine bridges form between Cys67-Cys97, Cys90-Cys142, Cys107-Cys112, Cys143-Cys148, and Cys182-Cys186. Residues 203–223 form a helical membrane-spanning segment; it reads WMVVAVLIALLILSILLFTLC. Binding to the ribonucleoprotein stretches follow at residues 219–231 and 219–236; these read LFTLCCPRRPSYR and LFTLCCPRRPSYRKEHKP. Topologically, residues 224-236 are cytoplasmic; it reads CPRRPSYRKEHKP.

Belongs to the hantavirus envelope glycoprotein family. As to quaternary structure, homodimer. Homotetramer; forms heterotetrameric Gn-Gc spikes in the pre-fusion conformation. Homotrimer; forms homotrimer in the post-fusion conformation at acidic pH. Interacts (via C-terminus) with the nucleoprotein. Post-translationally, envelope polyprotein precursor is quickly cleaved in vivo just after synthesis, presumably by host signal peptidase.

It localises to the virion membrane. The protein localises to the host cell surface. Its subcellular location is the host Golgi apparatus membrane. The protein resides in the host endoplasmic reticulum membrane. Forms homotetramers with glycoprotein N at the surface of the virion. Attaches the virion to host cell receptors including integrin ITGAV/ITGB3. This attachment induces virion internalization predominantly through clathrin-dependent endocytosis. Class II fusion protein that promotes fusion of viral membrane with host endosomal membrane after endocytosis of the virion. The polypeptide is Envelope glycoprotein (GP) (Homo sapiens (Human)).